Reading from the N-terminus, the 96-residue chain is Small ribosomal subunit protein bS6 (96 aa).

Belongs to the bacterial ribosomal protein bS6 family.

Its function is as follows. Binds together with bS18 to 16S ribosomal RNA. This chain is Small ribosomal subunit protein bS6, found in Streptococcus thermophilus (strain ATCC BAA-250 / LMG 18311).